Here is a 507-residue protein sequence, read N- to C-terminus: MASEQDVRARLQRAGQEHLLRFWAELAPEPRAALLAELALLEPEALREHCRRAAEACARPHGPPPDLAARLRPLPPERVGRASRSDPETRRRWEEEGFRQISLNKVAVLLLAGGQGTRLGVTYPKGMYRVGLPSRKTLYQLQAERIRRVEQLAGERHGTRCTVPWYVMTSEFTLGPTAEFFREHNFFHLDPANVVMFEQRLLPAVTFDGKVILERKDKVAMAPDGNGGLYCALEDHKILEDMERRGVEFVHVYCVDNILVRLADPVFIGFCVLQGADCGAKVVEKAYPEEPVGVVCQVDGVPQVVEYSEISPETAQLRASDGSLLYNAGNICNHFFTRGFLKAVTREFEPLLKPHVAVKKVPYVDEEGNLVKPLKPNGIKMEKFVFDVFRFAKNFAALEVLREEEFSPLKNAEPADRDSPRTARQALLTQHYRWALRAGARFLDAHGAWLPELPSLPPNGDPPAICEISPLVSYSGEGLEVYLQGREFQSPLILDEDQAREPQLQES.

Residues 56–91 (ACARPHGPPPDLAARLRPLPPERVGRASRSDPETRR) form a disordered region. Basic and acidic residues predominate over residues 78-91 (RVGRASRSDPETRR). A Substrate binding motif is present at residues 111–114 (LAGG). UTP contacts are provided by residues 111–114 (LAGG), lysine 125, glutamine 199, and glycine 225. A substrate-binding site is contributed by asparagine 226. Residue aspartate 256 coordinates UTP. Residues 306–307 (EY) carry the Substrate binding motif. Lysine 380 contacts UTP. A substrate-binding site is contributed by lysine 410.

The protein belongs to the UDPGP type 1 family.

This is UDP-N-acetylhexosamine pyrophosphorylase-like protein 1 (UAP1L1) from Homo sapiens (Human).